Reading from the N-terminus, the 113-residue chain is Probable UPF0122 protein (113 aa).

Belongs to the UPF0122 family.

Might take part in the signal recognition particle (SRP) pathway. This is inferred from the conservation of its genetic proximity to ftsY/ffh. May be a regulatory protein. The sequence is that of Probable UPF0122 protein from Mycoplasma mycoides.